The sequence spans 526 residues: MSGNKVEVDKRRTFAIISHPDAGKTTITEKVLLFGNALQKAGTVKGKKSGQHAKSDWMEMEKDRGISITTSVMQFPYGGALVNLLDTPGHEDFSEDTYRTLTAVDSCLMVIDSAKGVEERTIKLMEVTRLRDTPIVTFMNKLDRDIRDPIDLMDEVESVLNIACAPITWPIGSGKEFKGIYHILRDEVVLYQGGMGHTIQDRRVIKGINNPDLEKAIGSYAADLRDEMELVRGASHEFDHAAFLKGELTPVFFGTALGNFGVDHILDGIVEWAPKPLPRESDARVVMPEEEKFTGFVFKIQANMDPKHRDRVAFMRVCSGRYEQGMKMHHVRIGKDVNVSDALTFMAGDRERAEEAYPGDIIGLHNHGTIRIGDTFTQGEKFRFTGVPNFAPEMFRRIRLRDPLKQKQLLKGLVQLSEEGAVQVFRPIDTNDLIVGAVGVLQFEVVVGRLKSEYNVEAIYEGISVSTARWVYCKDERKLEEFRRKCSQNLALDGGDNLTYIAPTMVNLNLSMERYPDIEFAKTREH.

The tr-type G domain maps to 9 to 277 (DKRRTFAIIS…GIVEWAPKPL (269 aa)). Residues 18–25 (SHPDAGKT), 86–90 (DTPGH), and 140–143 (NKLD) contribute to the GTP site.

It belongs to the TRAFAC class translation factor GTPase superfamily. Classic translation factor GTPase family. PrfC subfamily.

The protein localises to the cytoplasm. Functionally, increases the formation of ribosomal termination complexes and stimulates activities of RF-1 and RF-2. It binds guanine nucleotides and has strong preference for UGA stop codons. It may interact directly with the ribosome. The stimulation of RF-1 and RF-2 is significantly reduced by GTP and GDP, but not by GMP. The chain is Peptide chain release factor 3 from Shewanella baltica (strain OS223).